We begin with the raw amino-acid sequence, 122 residues long: Large ribosomal subunit protein uL14 (122 aa).

This sequence belongs to the universal ribosomal protein uL14 family. Part of the 50S ribosomal subunit. Forms a cluster with proteins L3 and L19. In the 70S ribosome, L14 and L19 interact and together make contacts with the 16S rRNA in bridges B5 and B8.

Its function is as follows. Binds to 23S rRNA. Forms part of two intersubunit bridges in the 70S ribosome. This chain is Large ribosomal subunit protein uL14, found in Listeria monocytogenes serotype 4b (strain CLIP80459).